Consider the following 1817-residue polypeptide: MFNKSFGTPFGGGTGGFGTTSTFGQNTGFGTTSGGAFGTSAFGSSNNTGGLFGNSQTKPGGLFGTSSFSQPATSTSTGFGFGTSTGTANTLFGTASTGTSLFSSQNNAFAQNKPTGFGNFGTSTSSGGLFGTTNTTSNPFGSTSGSLFGPSSFTAAPTGTTIKFNPPTGTDTMVKAGVSTNISTKHQCITAMKEYESKSLEELRLEDYQANRKGPQNQVGAGTTTGLFGSSPATSSATGLFSSSTTNSGFAYGQNKTAFGTSTTGFGTNPGGLFGQQNQQTTSLFSKPFGQATTTQNTGFSFGNTSTIGQPSTNTMGLFGVTQASQPGGLFGTATNTSTGTAFGTGTGLFGQTNTGFGAVGSTLFGNNKLTTFGSSTTSAPSFGTTSGGLFGNKPTLTLGTNTNTSNFGFGTNTSGNSIFGSKPAPGTLGTGLGAGFGTALGAGQASLFGNNQPKIGGPLGTGAFGAPGFNTTTATLGFGAPQAPVALTDPNASAAQQAVLQQHINSLTYSPFGDSPLFRNPMSDPKKKEERLKPTNPAAQKALTTPTHYKLTPRPATRVRPKALQTTGTAKSHLFDGLDDDEPSLANGAFMPKKSIKKLVLKNLNNSNLFSPVNRDSENLASPSEYPENGERFSFLSKPVDENHQQDGDEDSLVSHFYTNPIAKPIPQTPESAGNKHSNSNSVDDTIVALNMRAALRNGLEGSSEETSFHDESLQDDREEIENNSYHMHPAGIILTKVGYYTIPSMDDLAKITNEKGECIVSDFTIGRKGYGSIYFEGDVNLTNLNLDDIVHIRRKEVVVYLDDNQKPPVGEGLNRKAEVTLDGVWPTDKTSRCLIKSPDRLADINYEGRLEAVSRKQGAQFKEYRPETGSWVFKVSHFSKYGLQDSDEEEEEHPSKTSTKKLKTAPLPPASQTTPLQMALNGKPAPPPQSQSPEVEQLGRVVELDSDMVDITQEPVLDTMLEESMPEDQEPVSASTHIASSLGINPHVLQIMKASLLTDEEDVDMALDQRFSRLPSKADTSQEICSPRLPISASHSSKTRSLVGGLLQSKFTSGAFLSPSVSVQECRTPRAASLMNIPSTSSWSVPPPLTSVFTMPSPAPEVPLKTVGTRRQLGLVPREKSVTYGKGKLLMDMALFMGRSFRVGWGPNWTLANSGEQLNGSHELENHQIADSMEFGFLPNPVAVKPLTESPFKVHLEKLSLRQRKPDEDMKLYQTPLELKLKHSTVHVDELCPLIVPNLGVAVIHDYADWVKEASGDLPEAQIVKHWSLTWTLCEALWGHLKELDSQLNEPREYIQILERRRAFSRWLSCTATPQIEEEVSLTQKNSPVEAVFSYLTGKRISEACSLAQQSGDHRLALLLSQFVGSQSVRELLTMQLVDWHQLQADSFIQDERLRIFALLAGKPVWQLSEKKQINVCSQLDWKRSLAIHLWYLLPPTASISRALSMYEEAFQNTSDSDRYACSPLPSYLEGSGCVIAEEQNSQTPLRDVCFHLLKLYSDRHYDLNQLLEPRSITADPLDYRLSWHLWEVLRALNYTHLSAQCEGVLQASYAGQLESEGLWEWAIFVLLHIDNSGIREKAVRELLTRHCQLLETPESWAKETFLTQKLRVPAKWIHEAKAVRAHMESDKHLEALCLFKAEHWNRCHKLIIRHLASDAIINENYDYLKGFLEDLAPPERSSLIQDWETSGLVYLDYIRVIEMLRHIQQVDCSGNDLEQLHIKVTSLCSRIEQIQCYSAKDRLAQSDMAKRVANLLRVVLSLHHPPDRTSDSTPDPQRVPLRLLAPHIGRLPMPEDYAMDELRSLTQSYLRELAVGSL.

Positions 1–156 (MFNKSFGTPF…LFGPSSFTAA (156 aa)) are FG repeats 1. Residues 157-213 (PTGTTIKFNPPTGTDTMVKAGVSTNISTKHQCITAMKEYESKSLEELRLEDYQANRK) form a GLEBS; interaction with RAE1 region. Residues 214–480 (GPQNQVGAGT…NTTTATLGFG (267 aa)) form an FG repeats 2 region. The segment at 512-535 (PFGDSPLFRNPMSDPKKKEERLKP) is disordered. Ser524 carries the phosphoserine modification. Over residues 525-534 (DPKKKEERLK) the composition is skewed to basic and acidic residues. Lys563 is covalently cross-linked (Glycyl lysine isopeptide (Lys-Gly) (interchain with G-Cter in SUMO2)). Lys603 carries the post-translational modification N6-acetyllysine; alternate. Lys603 is covalently cross-linked (Glycyl lysine isopeptide (Lys-Gly) (interchain with G-Cter in SUMO2); alternate). Phosphoserine occurs at positions 608, 612, 618, 623, 625, and 653. Positions 614 to 633 (VNRDSENLASPSEYPENGER) are disordered. Residues 662–682 (PIAKPIPQTPESAGNKHSNSN) are disordered. Lys665 participates in a covalent cross-link: Glycyl lysine isopeptide (Lys-Gly) (interchain with G-Cter in SUMO2). Residue Thr670 is modified to Phosphothreonine. A compositionally biased stretch (polar residues) spans 670-682 (TPESAGNKHSNSN). 4 positions are modified to phosphoserine: Ser673, Ser681, Ser683, and Ser839. Positions 738 to 880 (KVGYYTIPSM…GSWVFKVSHF (143 aa)) constitute a Peptidase S59 domain. Catalysis depends on Ser881, which acts as the Nucleophile. Positions 886-937 (QDSDEEEEEHPSKTSTKKLKTAPLPPASQTTPLQMALNGKPAPPPQSQSPEV) are disordered. Ser888, Ser897, and Ser934 each carry phosphoserine. Thr1000 carries the post-translational modification Phosphothreonine. 5 positions are modified to phosphoserine: Ser1023, Ser1028, Ser1043, Ser1060, and Ser1064. The residue at position 1070 (Thr1070) is a Phosphothreonine. Ser1329 is modified (phosphoserine). Phosphothreonine is present on Thr1772.

This sequence belongs to the nucleoporin GLFG family. As to quaternary structure, part of the nuclear pore complex (NPC). Interacts directly with NUP96. Part of the Nup160 subcomplex in the nuclear pore which is composed of NUP160, NUP133, NUP107 and NUP96; this complex plays a role in RNA export and in tethering NUP98 and NUP153 to the nucleus. Interacts with RAE1. Does not interact with TPR. Interacts with NUP88. Interacts directly with NUP88 and NUP214, subunits of the cytoplasmic filaments of the NPC. Interacts (via N-terminus) with DHX9 (via DRBM, OB-fold and RGG domains); this interaction occurs in a RNA-dependent manner and stimulates DHX9-mediated ATPase activity. (Microbial infection) Interacts with HIV-1 capsid protein P24 and nucleocapsid protein P7 (in vitro); the interaction may promote the integration of the virus in the host nucleus (in vitro). In terms of assembly, (Microbial infection) Interacts with vesicular stomatitis virus protein M. As to quaternary structure, (Microbial infection) Interacts with SARS coronavirus-2/SARS-CoV-2 ORF6 protein; the interaction blocks STAT1 nuclear translocation, antagonizes interferon signaling and blocks mRNA nuclear export (ex vivo). (Microbial infection) Interacts with SARS coronavirus/SARS-CoV ORF6 protein. In terms of processing, isoform 1 to isoform 4 are autoproteolytically cleaved to yield Nup98 and Nup96 or Nup98 only, respectively. Cleaved Nup98 is necessary for the targeting of Nup98 to the nuclear pore and the interaction with Nup96. Post-translationally, proteolytically degraded after poliovirus (PV) infection; degradation is partial and NCP- and TPR-binding domains withstand degradation.

It localises to the nucleus membrane. It is found in the nucleus. The protein localises to the nuclear pore complex. Its subcellular location is the nucleoplasm. Its function is as follows. Plays a role in the nuclear pore complex (NPC) assembly and/or maintenance. NUP98 and NUP96 are involved in the bidirectional transport across the NPC. May anchor NUP153 and TPR to the NPC. In cooperation with DHX9, plays a role in transcription and alternative splicing activation of a subset of genes. Involved in the localization of DHX9 in discrete intranuclear foci (GLFG-body). In terms of biological role, (Microbial infection) Interacts with HIV-1 capsid protein P24 and nucleocapsid protein P7 and may thereby promote the integration of the virus in the host nucleus (in vitro). Binding affinity to HIV-1 CA-NC complexes bearing the capsid change Asn-74-Asp is reduced (in vitro). The polypeptide is Nuclear pore complex protein Nup98-Nup96 (Homo sapiens (Human)).